The sequence spans 141 residues: Cystatin (141 aa).

The signal sequence occupies residues 1–26 (MVHSQLPVAAPLRLLCALLLLPSATM). The Cystatin domain occupies 29 to 129 (GGLSPRSVTD…CHFQVWSRPW (101 aa)). The Secondary area of contact motif lies at 73-77 (QVVAG). Disulfide bonds link cysteine 91–cysteine 107 and cysteine 120–cysteine 140.

It belongs to the cystatin family. Expressed at a low level by the venom gland (at protein level).

Its subcellular location is the secreted. In terms of biological role, inhibits various C1 cysteine proteases including cathepsin L, papain and cathepsin B. This protein has no toxic activity and its function in the venom is unknown. It may play a role as a housekeeping or regulatory protein. The chain is Cystatin from Pseudonaja textilis (Eastern brown snake).